Consider the following 241-residue polypeptide: Glucosamine-6-phosphate deaminase (241 aa).

The active-site Proton acceptor; for enolization step is Asp-67. Asn-136 (for ring-opening step) is an active-site residue. His-138 (proton acceptor; for ring-opening step) is an active-site residue. Catalysis depends on Glu-143, which acts as the For ring-opening step.

Belongs to the glucosamine/galactosamine-6-phosphate isomerase family. NagB subfamily.

The enzyme catalyses alpha-D-glucosamine 6-phosphate + H2O = beta-D-fructose 6-phosphate + NH4(+). The protein operates within amino-sugar metabolism; N-acetylneuraminate degradation; D-fructose 6-phosphate from N-acetylneuraminate: step 5/5. Functionally, catalyzes the reversible isomerization-deamination of glucosamine 6-phosphate (GlcN6P) to form fructose 6-phosphate (Fru6P) and ammonium ion. The sequence is that of Glucosamine-6-phosphate deaminase from Clostridium novyi (strain NT).